A 125-amino-acid polypeptide reads, in one-letter code: Egg cell-secreted protein 1.2 (125 aa).

An N-terminal signal peptide occupies residues 1 to 22 (MASNTSFLFATIAILLVLNISG).

The protein belongs to the plant egg cell-secreted peptide family. As to expression, restricted to female reproductive tissues, specifically accumulating in storage vesicles of the unfertilized egg cell.

The protein localises to the cytoplasmic vesicle. Its subcellular location is the secreted. Involved in the regulation of gamete interactions during the double fertilization and to prevent multiple-pollen tube attraction; mediates the redistribution of the gamete fusogen HAP2/GCS1 to the cell surface after secretion upon sperm arrival. In Arabidopsis thaliana (Mouse-ear cress), this protein is Egg cell-secreted protein 1.2 (EC1.2).